The following is a 45-amino-acid chain: RDCKSDSHKFHGACFSDTNCANVCQTEGFTRGKCDGIHCHCIKDC.

Disulfide bonds link Cys3–Cys45, Cys14–Cys34, Cys20–Cys39, and Cys24–Cys41.

Plant defense peptide. The protein is Defensin Tk-AMP-D3 of Triticum kiharae (Wheat).